Consider the following 639-residue polypeptide: 3D-(3,5/4)-trihydroxycyclohexane-1,2-dione hydrolase (639 aa).

Position 62 (Glu62) interacts with thiamine diphosphate. Positions 438–518 (SLPGDLQRMW…INILLFDNCG (81 aa)) are thiamine pyrophosphate binding. Mg(2+)-binding residues include Asp489 and Asn516.

This sequence belongs to the TPP enzyme family. It depends on Mg(2+) as a cofactor. The cofactor is thiamine diphosphate.

It carries out the reaction 3D-3,5/4-trihydroxycyclohexane-1,2-dione + H2O = 5-deoxy-D-glucuronate + H(+). It participates in polyol metabolism; myo-inositol degradation into acetyl-CoA; acetyl-CoA from myo-inositol: step 3/7. Its function is as follows. Involved in the cleavage of the C1-C2 bond of 3D-(3,5/4)-trihydroxycyclohexane-1,2-dione (THcHDO) to yield 5-deoxy-glucuronate (5DG). This chain is 3D-(3,5/4)-trihydroxycyclohexane-1,2-dione hydrolase, found in Clostridium perfringens (strain ATCC 13124 / DSM 756 / JCM 1290 / NCIMB 6125 / NCTC 8237 / Type A).